Here is a 513-residue protein sequence, read N- to C-terminus: ATP synthase subunit alpha (513 aa).

Residue 169-176 (GDRQTGKT) participates in ATP binding.

It belongs to the ATPase alpha/beta chains family. F-type ATPases have 2 components, CF(1) - the catalytic core - and CF(0) - the membrane proton channel. CF(1) has five subunits: alpha(3), beta(3), gamma(1), delta(1), epsilon(1). CF(0) has three main subunits: a(1), b(2) and c(9-12). The alpha and beta chains form an alternating ring which encloses part of the gamma chain. CF(1) is attached to CF(0) by a central stalk formed by the gamma and epsilon chains, while a peripheral stalk is formed by the delta and b chains.

Its subcellular location is the cell inner membrane. The catalysed reaction is ATP + H2O + 4 H(+)(in) = ADP + phosphate + 5 H(+)(out). In terms of biological role, produces ATP from ADP in the presence of a proton gradient across the membrane. The alpha chain is a regulatory subunit. The protein is ATP synthase subunit alpha of Salmonella agona (strain SL483).